The chain runs to 169 residues: Peptide methionine sulfoxide reductase MsrA (169 aa).

C10 is a catalytic residue.

It belongs to the MsrA Met sulfoxide reductase family.

It carries out the reaction L-methionyl-[protein] + [thioredoxin]-disulfide + H2O = L-methionyl-(S)-S-oxide-[protein] + [thioredoxin]-dithiol. The enzyme catalyses [thioredoxin]-disulfide + L-methionine + H2O = L-methionine (S)-S-oxide + [thioredoxin]-dithiol. Its function is as follows. Has an important function as a repair enzyme for proteins that have been inactivated by oxidation. Catalyzes the reversible oxidation-reduction of methionine sulfoxide in proteins to methionine. This is Peptide methionine sulfoxide reductase MsrA from Streptococcus equi subsp. zooepidemicus (strain MGCS10565).